The following is a 148-amino-acid chain: Early glycoprotein GP48 (148 aa).

The N-terminal stretch at 1–21 (MMLRAWRLMVLLAAYCYYVFA) is a signal peptide. Residues asparagine 22, asparagine 44, asparagine 49, asparagine 57, asparagine 65, asparagine 104, asparagine 108, asparagine 118, asparagine 135, and asparagine 144 are each glycosylated (N-linked (GlcNAc...) asparagine; by host).

The protein belongs to the RL11 family. In terms of processing, N-glycosylated and possibly O-glycosylated.

The protein localises to the virion membrane. In Homo sapiens (Human), this protein is Early glycoprotein GP48 (UL4).